Reading from the N-terminus, the 141-residue chain is Hemoglobin D subunit alpha (141 aa).

In terms of domain architecture, Globin spans Met1–Arg141. O2 is bound at residue His58. A heme b-binding site is contributed by His87.

This sequence belongs to the globin family. In terms of assembly, tetramer of two alpha chains and two beta chains. As to expression, red blood cells.

In terms of biological role, involved in oxygen transport from the lung to the various peripheral tissues. The chain is Hemoglobin D subunit alpha from Aldabrachelys gigantea (Aldabra giant tortoise).